The primary structure comprises 270 residues: 4-diphosphocytidyl-2-C-methyl-D-erythritol kinase (270 aa).

Lys-8 is an active-site residue. ATP is bound at residue 90-100; that stretch reads PIGAGLGGGSS. Asp-132 is an active-site residue.

The protein belongs to the GHMP kinase family. IspE subfamily.

The catalysed reaction is 4-CDP-2-C-methyl-D-erythritol + ATP = 4-CDP-2-C-methyl-D-erythritol 2-phosphate + ADP + H(+). It functions in the pathway isoprenoid biosynthesis; isopentenyl diphosphate biosynthesis via DXP pathway; isopentenyl diphosphate from 1-deoxy-D-xylulose 5-phosphate: step 3/6. Its function is as follows. Catalyzes the phosphorylation of the position 2 hydroxy group of 4-diphosphocytidyl-2C-methyl-D-erythritol. In Cytophaga hutchinsonii (strain ATCC 33406 / DSM 1761 / CIP 103989 / NBRC 15051 / NCIMB 9469 / D465), this protein is 4-diphosphocytidyl-2-C-methyl-D-erythritol kinase.